We begin with the raw amino-acid sequence, 442 residues long: Glutamate--methylamine ligase (442 aa).

The GS beta-grasp domain maps to N13–K97. One can recognise a GS catalytic domain in the interval T103–F442.

This sequence belongs to the glutamine synthetase family. Type 3 subfamily. Mg(2+) serves as cofactor.

The enzyme catalyses methylamine + L-glutamate + ATP = N(5)-methyl-L-glutamine + ADP + phosphate + H(+). In terms of biological role, catalyzes the formation of N(5)-methyl-L-glutamine from glutamate and methylamine. This is Glutamate--methylamine ligase from Methyloversatilis universalis (strain ATCC BAA-1314 / DSM 25237 / JCM 13912 / CCUG 52030 / FAM5).